Consider the following 362-residue polypeptide: N5-carboxyaminoimidazole ribonucleotide synthase (362 aa).

ATP-binding positions include Arg-108, Lys-148, 153–159 (GYDGKGQ), 185–188 (EGFV), Glu-193, His-216, and 270–271 (NE). The 189-residue stretch at 112–300 (KQFLNESGIE…QFEQHIRAVA (189 aa)) folds into the ATP-grasp domain.

The protein belongs to the PurK/PurT family. As to quaternary structure, homodimer.

The enzyme catalyses 5-amino-1-(5-phospho-beta-D-ribosyl)imidazole + hydrogencarbonate + ATP = 5-carboxyamino-1-(5-phospho-D-ribosyl)imidazole + ADP + phosphate + 2 H(+). It functions in the pathway purine metabolism; IMP biosynthesis via de novo pathway; 5-amino-1-(5-phospho-D-ribosyl)imidazole-4-carboxylate from 5-amino-1-(5-phospho-D-ribosyl)imidazole (N5-CAIR route): step 1/2. Its function is as follows. Catalyzes the ATP-dependent conversion of 5-aminoimidazole ribonucleotide (AIR) and HCO(3)(-) to N5-carboxyaminoimidazole ribonucleotide (N5-CAIR). The sequence is that of N5-carboxyaminoimidazole ribonucleotide synthase from Brucella melitensis biotype 1 (strain ATCC 23456 / CCUG 17765 / NCTC 10094 / 16M).